A 356-amino-acid polypeptide reads, in one-letter code: NADH-quinone oxidoreductase subunit H (356 aa).

8 helical membrane passes run 18–38 (IIMI…IAYI), 87–107 (GVFL…WAVI), 120–140 (VGIL…IMAG), 166–186 (IGFV…SAVV), 205–225 (ILNW…VSAL), 265–285 (AITT…LPPI), 292–312 (WVPG…LIAM), and 333–353 (FLPL…FAGI).

The protein belongs to the complex I subunit 1 family. In terms of assembly, NDH-1 is composed of 14 different subunits. Subunits NuoA, H, J, K, L, M, N constitute the membrane sector of the complex.

It localises to the cell inner membrane. It catalyses the reaction a quinone + NADH + 5 H(+)(in) = a quinol + NAD(+) + 4 H(+)(out). Its function is as follows. NDH-1 shuttles electrons from NADH, via FMN and iron-sulfur (Fe-S) centers, to quinones in the respiratory chain. The immediate electron acceptor for the enzyme in this species is believed to be ubiquinone. Couples the redox reaction to proton translocation (for every two electrons transferred, four hydrogen ions are translocated across the cytoplasmic membrane), and thus conserves the redox energy in a proton gradient. This subunit may bind ubiquinone. The protein is NADH-quinone oxidoreductase subunit H of Bradyrhizobium sp. (strain ORS 278).